The chain runs to 236 residues: 5'-methylthioadenosine/S-adenosylhomocysteine nucleosidase (236 aa).

Catalysis depends on Glu12, which acts as the Proton acceptor. Residues Gly78, Met153, and 174 to 175 contribute to the substrate site; that span reads ME. Catalysis depends on Asp198, which acts as the Proton donor.

The protein belongs to the PNP/UDP phosphorylase family. MtnN subfamily.

The catalysed reaction is S-adenosyl-L-homocysteine + H2O = S-(5-deoxy-D-ribos-5-yl)-L-homocysteine + adenine. The enzyme catalyses S-methyl-5'-thioadenosine + H2O = 5-(methylsulfanyl)-D-ribose + adenine. It catalyses the reaction 5'-deoxyadenosine + H2O = 5-deoxy-D-ribose + adenine. It participates in amino-acid biosynthesis; L-methionine biosynthesis via salvage pathway; S-methyl-5-thio-alpha-D-ribose 1-phosphate from S-methyl-5'-thioadenosine (hydrolase route): step 1/2. Catalyzes the irreversible cleavage of the glycosidic bond in both 5'-methylthioadenosine (MTA) and S-adenosylhomocysteine (SAH/AdoHcy) to adenine and the corresponding thioribose, 5'-methylthioribose and S-ribosylhomocysteine, respectively. Also cleaves 5'-deoxyadenosine, a toxic by-product of radical S-adenosylmethionine (SAM) enzymes, into 5-deoxyribose and adenine. In Geobacillus thermodenitrificans (strain NG80-2), this protein is 5'-methylthioadenosine/S-adenosylhomocysteine nucleosidase.